Consider the following 532-residue polypeptide: ATP synthase subunit alpha (532 aa).

ATP is bound at residue 171–178; the sequence is GDRQTGKT.

Belongs to the ATPase alpha/beta chains family. As to quaternary structure, F-type ATPases have 2 components, CF(1) - the catalytic core - and CF(0) - the membrane proton channel. CF(1) has five subunits: alpha(3), beta(3), gamma(1), delta(1), epsilon(1). CF(0) has three main subunits: a(1), b(2) and c(9-12). The alpha and beta chains form an alternating ring which encloses part of the gamma chain. CF(1) is attached to CF(0) by a central stalk formed by the gamma and epsilon chains, while a peripheral stalk is formed by the delta and b chains.

It is found in the cell membrane. It carries out the reaction ATP + H2O + 4 H(+)(in) = ADP + phosphate + 5 H(+)(out). In terms of biological role, produces ATP from ADP in the presence of a proton gradient across the membrane. The alpha chain is a regulatory subunit. This chain is ATP synthase subunit alpha, found in Amoebophilus asiaticus (strain 5a2).